A 401-amino-acid polypeptide reads, in one-letter code: Phosphoglycerate kinase (401 aa).

Residues 26–28, R41, 64–67, R123, and R156 each bind substrate; these read DLN and HLGR. ATP-binding positions include K207, G298, E329, and 355–358; that span reads GGDS.

The protein belongs to the phosphoglycerate kinase family. As to quaternary structure, monomer.

It localises to the cytoplasm. It carries out the reaction (2R)-3-phosphoglycerate + ATP = (2R)-3-phospho-glyceroyl phosphate + ADP. It functions in the pathway carbohydrate degradation; glycolysis; pyruvate from D-glyceraldehyde 3-phosphate: step 2/5. This chain is Phosphoglycerate kinase, found in Bdellovibrio bacteriovorus (strain ATCC 15356 / DSM 50701 / NCIMB 9529 / HD100).